The primary structure comprises 353 residues: Phosphate acyltransferase (353 aa).

This sequence belongs to the PlsX family. Homodimer. Probably interacts with PlsY.

It localises to the cytoplasm. The catalysed reaction is a fatty acyl-[ACP] + phosphate = an acyl phosphate + holo-[ACP]. The protein operates within lipid metabolism; phospholipid metabolism. Catalyzes the reversible formation of acyl-phosphate (acyl-PO(4)) from acyl-[acyl-carrier-protein] (acyl-ACP). This enzyme utilizes acyl-ACP as fatty acyl donor, but not acyl-CoA. The sequence is that of Phosphate acyltransferase from Bradyrhizobium diazoefficiens (strain JCM 10833 / BCRC 13528 / IAM 13628 / NBRC 14792 / USDA 110).